The following is a 364-amino-acid chain: Pyrimidine monooxygenase RutA (364 aa).

Residues 49 to 50 (IK), Asn-115, Glu-124, 140 to 141 (RY), and Ser-190 each bind FMN.

It belongs to the NtaA/SnaA/DszA monooxygenase family. RutA subfamily.

The catalysed reaction is uracil + FMNH2 + NADH + O2 = (Z)-3-ureidoacrylate + FMN + NAD(+) + H2O + H(+). It catalyses the reaction thymine + FMNH2 + NADH + O2 = (Z)-2-methylureidoacrylate + FMN + NAD(+) + H2O + H(+). In terms of biological role, catalyzes the pyrimidine ring opening between N-3 and C-4 by an unusual flavin hydroperoxide-catalyzed mechanism, adding oxygen atoms in the process to yield ureidoacrylate peracid, that immediately reacts with FMN forming ureidoacrylate and FMN-N(5)-oxide. The FMN-N(5)-oxide reacts spontaneously with NADH to produce FMN. Requires the flavin reductase RutF to regenerate FMN in vivo. The protein is Pyrimidine monooxygenase RutA of Methylorubrum extorquens (strain ATCC 14718 / DSM 1338 / JCM 2805 / NCIMB 9133 / AM1) (Methylobacterium extorquens).